The sequence spans 254 residues: 5'-nucleotidase SurE (254 aa).

Residues Asp8, Asp9, Ser38, and Asn91 each coordinate a divalent metal cation.

Belongs to the SurE nucleotidase family. It depends on a divalent metal cation as a cofactor.

The protein resides in the cytoplasm. The enzyme catalyses a ribonucleoside 5'-phosphate + H2O = a ribonucleoside + phosphate. Nucleotidase that shows phosphatase activity on nucleoside 5'-monophosphates. The sequence is that of 5'-nucleotidase SurE from Anaeromyxobacter dehalogenans (strain 2CP-C).